A 203-amino-acid chain; its full sequence is Holliday junction branch migration complex subunit RuvA (203 aa).

A domain I region spans residues 1–63 (MIGKLSGKVD…EEHMHLYGFL (63 aa)). The interval 64–142 (TLEEKIFFNL…KISSGSAIIK (79 aa)) is domain II. Residues 143 to 149 (ESLNIKN) are flexible linker. Positions 150–203 (ITPVASNEVIKALVNLGFSRFEAQNAVQGIITQNPEISIDELIKTALKNRNSNF) are domain III.

It belongs to the RuvA family. As to quaternary structure, homotetramer. Forms an RuvA(8)-RuvB(12)-Holliday junction (HJ) complex. HJ DNA is sandwiched between 2 RuvA tetramers; dsDNA enters through RuvA and exits via RuvB. An RuvB hexamer assembles on each DNA strand where it exits the tetramer. Each RuvB hexamer is contacted by two RuvA subunits (via domain III) on 2 adjacent RuvB subunits; this complex drives branch migration. In the full resolvosome a probable DNA-RuvA(4)-RuvB(12)-RuvC(2) complex forms which resolves the HJ.

Its subcellular location is the cytoplasm. In terms of biological role, the RuvA-RuvB-RuvC complex processes Holliday junction (HJ) DNA during genetic recombination and DNA repair, while the RuvA-RuvB complex plays an important role in the rescue of blocked DNA replication forks via replication fork reversal (RFR). RuvA specifically binds to HJ cruciform DNA, conferring on it an open structure. The RuvB hexamer acts as an ATP-dependent pump, pulling dsDNA into and through the RuvAB complex. HJ branch migration allows RuvC to scan DNA until it finds its consensus sequence, where it cleaves and resolves the cruciform DNA. The polypeptide is Holliday junction branch migration complex subunit RuvA (Rickettsia peacockii (strain Rustic)).